The following is a 1322-amino-acid chain: Myosin-1 (1322 aa).

A Myosin motor domain is found at A42–D728. G135–T142 is a binding site for ATP. At S369 the chain carries Phosphoserine. Residues V417 to A499 are actin-binding. 2 consecutive IQ domains span residues H732–S752 and A753–Q778. Residues R786 to R980 form the TH1 domain. Disordered regions lie at residues I966–Y1090 and V1137–A1162. 2 stretches are compositionally biased toward low complexity: residues S1000 to T1017 and G1027 to A1056. Composition is skewed to polar residues over residues P1078–M1087 and V1137–T1148. In terms of domain architecture, SH3 spans R1184–E1243. Positions A1246–F1300 are disordered. Low complexity predominate over residues P1257–A1267. Positions V1269–P1280 are enriched in polar residues.

It belongs to the TRAFAC class myosin-kinesin ATPase superfamily. Myosin family. In terms of processing, phosphorylation of the TEDS site (Ser-369) is required for the polarization of the actin cytoskeleton. Phosphorylation probably activates the myosin-I ATPase activity.

The protein localises to the cytoplasm. It is found in the cytoskeleton. Its subcellular location is the actin patch. In terms of biological role, type-I myosin implicated in the organization of the actin cytoskeleton. Required for proper actin cytoskeleton polarization. At the cell cortex, assembles in patch-like structures together with proteins from the actin-polymerizing machinery and promotes actin assembly. Functions as actin nucleation-promoting factor (NPF) for the Arp2/3 complex. This chain is Myosin-1 (MYO1), found in Malassezia globosa (strain ATCC MYA-4612 / CBS 7966) (Dandruff-associated fungus).